The following is a 117-amino-acid chain: Large ribosomal subunit protein bL20c (117 aa).

This sequence belongs to the bacterial ribosomal protein bL20 family.

The protein localises to the plastid. It localises to the chloroplast. In terms of biological role, binds directly to 23S ribosomal RNA and is necessary for the in vitro assembly process of the 50S ribosomal subunit. It is not involved in the protein synthesizing functions of that subunit. This Calycanthus floridus var. glaucus (Eastern sweetshrub) protein is Large ribosomal subunit protein bL20c.